The primary structure comprises 337 residues: Protein-arginine kinase (337 aa).

Positions 12-240 constitute a Phosphagen kinase C-terminal domain; it reads IVIASKVKIL…NKLILREKNQ (229 aa). ATP is bound by residues 15-19, 162-166, and 193-198; these read ASKVK, RAKVF, and KSIYNS.

Belongs to the ATP:guanido phosphotransferase family.

The catalysed reaction is L-arginyl-[protein] + ATP = N(omega)-phospho-L-arginyl-[protein] + ADP + H(+). In terms of biological role, catalyzes the specific phosphorylation of arginine residues in proteins. This Clostridium perfringens (strain ATCC 13124 / DSM 756 / JCM 1290 / NCIMB 6125 / NCTC 8237 / Type A) protein is Protein-arginine kinase.